The sequence spans 68 residues: UPF0435 protein Sca_1453 (68 aa).

This sequence belongs to the UPF0435 family.

In Staphylococcus carnosus (strain TM300), this protein is UPF0435 protein Sca_1453.